Consider the following 51-residue polypeptide: Large ribosomal subunit protein eL39 (51 aa).

Belongs to the eukaryotic ribosomal protein eL39 family.

Its function is as follows. Binds specifically to a region in 26S rRNA near the subunit interface. This chain is Large ribosomal subunit protein eL39 (rpl39e), found in Sulfolobus acidocaldarius (strain ATCC 33909 / DSM 639 / JCM 8929 / NBRC 15157 / NCIMB 11770).